A 297-amino-acid polypeptide reads, in one-letter code: Flavin-dependent thymidylate synthase (297 aa).

The region spanning Gly41 to Tyr251 is the ThyX domain. Residues Thr87, Arg110–Arg112, and Glu118 contribute to the FAD site. DUMP-binding positions include Gln107–Arg110, Glu118–Arg122, and Arg190. The short motif at Arg110 to Ser120 is the ThyX motif element. Residues Asp206–His208 and His212 each bind FAD. Arg217 serves as a coordination point for dUMP. Catalysis depends on Arg217, which acts as the Involved in ionization of N3 of dUMP, leading to its activation.

Belongs to the thymidylate synthase ThyX family. As to quaternary structure, homotetramer. The cofactor is FAD.

The catalysed reaction is dUMP + (6R)-5,10-methylene-5,6,7,8-tetrahydrofolate + NADPH + H(+) = dTMP + (6S)-5,6,7,8-tetrahydrofolate + NADP(+). It functions in the pathway pyrimidine metabolism; dTTP biosynthesis. In terms of biological role, catalyzes the reductive methylation of 2'-deoxyuridine-5'-monophosphate (dUMP) to 2'-deoxythymidine-5'-monophosphate (dTMP) while utilizing 5,10-methylenetetrahydrofolate (mTHF) as the methyl donor, and NADPH and FADH(2) as the reductant. This is Flavin-dependent thymidylate synthase from Ehrlichia ruminantium (strain Gardel).